Reading from the N-terminus, the 434-residue chain is ATP-dependent RNA helicase RhlB (434 aa).

The short motif at 9-37 (KKFADFPLKPEILAALNENGFEFCTPIQA) is the Q motif element. Residues 40–219 (LPILLNAKDI…YDHMNDPEKV (180 aa)) enclose the Helicase ATP-binding domain. 53–60 (AQTGTGKT) is a binding site for ATP. A DEAD box motif is present at residues 165–168 (DEAD). One can recognise a Helicase C-terminal domain in the interval 243 to 390 (KMRLLLSLIE…VSNYDKDALL (148 aa)). Positions 390 to 434 (LDDIPPPARIHRKPPTSRTRDGGSKGAHRSGGNTSRPPRHRTRRP) are disordered.

The protein belongs to the DEAD box helicase family. RhlB subfamily. In terms of assembly, component of the RNA degradosome, which is a multiprotein complex involved in RNA processing and mRNA degradation.

The protein resides in the cytoplasm. The enzyme catalyses ATP + H2O = ADP + phosphate + H(+). DEAD-box RNA helicase involved in RNA degradation. Has RNA-dependent ATPase activity and unwinds double-stranded RNA. This chain is ATP-dependent RNA helicase RhlB, found in Shewanella frigidimarina (strain NCIMB 400).